The primary structure comprises 434 residues: Homogentisate 1,2-dioxygenase (434 aa).

The active-site Proton acceptor is the histidine 289. Fe cation contacts are provided by histidine 332 and glutamate 338. Homogentisate contacts are provided by tyrosine 347 and histidine 368. Residue histidine 368 coordinates Fe cation.

This sequence belongs to the homogentisate dioxygenase family. Hexamer; dimer of trimers. It depends on Fe cation as a cofactor.

It carries out the reaction homogentisate + O2 = 4-maleylacetoacetate + H(+). It functions in the pathway amino-acid degradation; L-phenylalanine degradation; acetoacetate and fumarate from L-phenylalanine: step 4/6. Its function is as follows. Involved in the catabolism of homogentisate (2,5-dihydroxyphenylacetate or 2,5-OH-PhAc), a central intermediate in the degradation of phenylalanine and tyrosine. Catalyzes the oxidative ring cleavage of the aromatic ring of homogentisate to yield maleylacetoacetate. This Pseudomonas syringae pv. tomato (strain ATCC BAA-871 / DC3000) protein is Homogentisate 1,2-dioxygenase.